Consider the following 325-residue polypeptide: 5-dehydro-2-deoxygluconokinase (325 aa).

The protein belongs to the carbohydrate kinase PfkB family.

The catalysed reaction is 5-dehydro-2-deoxy-D-gluconate + ATP = 6-phospho-5-dehydro-2-deoxy-D-gluconate + ADP + H(+). The protein operates within polyol metabolism; myo-inositol degradation into acetyl-CoA; acetyl-CoA from myo-inositol: step 5/7. In terms of biological role, catalyzes the phosphorylation of 5-dehydro-2-deoxy-D-gluconate (2-deoxy-5-keto-D-gluconate or DKG) to 6-phospho-5-dehydro-2-deoxy-D-gluconate (DKGP). The protein is 5-dehydro-2-deoxygluconokinase of Listeria monocytogenes serovar 1/2a (strain ATCC BAA-679 / EGD-e).